A 1183-amino-acid chain; its full sequence is SR-related and CTD-associated factor 4 (1183 aa).

Residues 1-139 (MDAVNAFNQE…PLLDMAAGTS (139 aa)) form the CID domain. At Lys49 the chain carries N6-acetyllysine. At Ser154 the chain carries Phosphoserine. 2 disordered regions span residues 299-324 (VPVP…VQQP) and 348-561 (HHQV…QIKS). Positions 367–380 (APPPFPPMPQPGMP) are enriched in pro residues. The span at 381 to 398 (QPGMAQPGLAQPGMAQPT) shows a compositional bias: low complexity. The segment covering 399 to 410 (MPQPGMPQPGMP) has biased composition (pro residues). Positions 411–428 (QPGMAQPGLAQPGMAQPG) are enriched in low complexity. Positions 429-440 (MPQPAMPQPAMP) are enriched in pro residues. Over residues 457 to 469 (PTFQSTFQPQNEP) the composition is skewed to polar residues. The span at 488-498 (EVKRHVPESRK) shows a compositional bias: basic and acidic residues. Positions 499 to 536 (SRSRSPKRRRSRSGSRSRRSRHRRSRSRSRDRRRHSPR) are enriched in basic residues. Over residues 538 to 553 (RSQERRDREKERERRQ) the composition is skewed to basic and acidic residues. One can recognise an RRM domain in the interval 569-643 (TTLWVGQLDK…KSIKIAWALN (75 aa)). Disordered regions lie at residues 691-722 (WKGI…IPKP), 800-858 (LPPG…SLPT), and 920-1183 (MPPH…EPPR). A Phosphoserine modification is found at Ser717. Composition is skewed to pro residues over residues 800-823 (LPPG…PPIS) and 920-952 (MPPH…PPHG). Residues 1006-1020 (SPSQQPAPAQQQPPQ) show a composition bias toward low complexity. Position 1042 is a phosphoserine (Ser1042). Over residues 1047–1122 (VENDRERYGS…NRKEKHEVAD (76 aa)) the composition is skewed to basic and acidic residues. The span at 1136–1145 (QVGTIDTVSE) shows a compositional bias: polar residues.

In terms of assembly, interacts with POLR2A; via C-terminal heptapeptide repeat domain (CTD) phosphorylated at 'Ser-2' and 'Ser-5'.

The protein resides in the nucleus. In terms of biological role, anti-terminator protein required to prevent early mRNA termination during transcription. Together with SCAF8, acts by suppressing the use of early, alternative poly(A) sites, thereby preventing the accumulation of non-functional truncated proteins. Mechanistically, associates with the phosphorylated C-terminal heptapeptide repeat domain (CTD) of the largest RNA polymerase II subunit (POLR2A), and subsequently binds nascent RNA upstream of early polyadenylation sites to prevent premature mRNA transcript cleavage and polyadenylation. Independently of SCAF8, also acts as a suppressor of transcriptional readthrough. This chain is SR-related and CTD-associated factor 4, found in Mus musculus (Mouse).